The primary structure comprises 454 residues: MKYKTVKSIPLFLLGSIVFTACSTPQSTFHLPVQTTVSAIKKDISGKTATAVKAASSSSSTTTSNDDNNQKGYFLETNRSTGTYDPNNSTRLIKLGESGDFHAADQNKPEEALFERLYGGIASLLNFRIIKPALTYWNTVTPSLKAIGKSSNLITFSQDIDETELQRALANNLIVADDGNNNFWFGLKSLSFNSAKLTDNAQTQMAQKTTQAVTLKSQAQMSSTNTKNTNKKIDLRDKITLSSTMNTQGSGDNKNPSSGLIQKLVSVENIEAEFSFVKTGFNGNEIKFGDFVTENSPTTTQLKQVWKKKWGTELKKTNYKLQLNNFSLLLTYTPEVNKVEKGNNGDSNKGTIATPNGFSFLYPANLNETPSSSSSYWTNVTDLTKAATDTENTNLLNDLQKSQEQVNQFVAAITQNHLDVSEAALTKKQFGSLSISDFFKAIFKENGKDTKAKS.

The N-terminal stretch at 1 to 21 (MKYKTVKSIPLFLLGSIVFTA) is a signal peptide. Cys-22 carries the N-palmitoyl cysteine lipid modification. Residue Cys-22 is the site of S-diacylglycerol cysteine attachment. A compositionally biased stretch (low complexity) spans 55-64 (ASSSSSTTTS). The segment at 55–87 (ASSSSSTTTSNDDNNQKGYFLETNRSTGTYDPN) is disordered. The segment covering 65-87 (NDDNNQKGYFLETNRSTGTYDPN) has biased composition (polar residues).

Its subcellular location is the cell membrane. This is an uncharacterized protein from Mycoplasma pneumoniae (strain ATCC 29342 / M129 / Subtype 1) (Mycoplasmoides pneumoniae).